The sequence spans 155 residues: Aspartate carbamoyltransferase regulatory chain (155 aa).

Residues Cys-111, Cys-116, Cys-137, and Cys-140 each contribute to the Zn(2+) site.

The protein belongs to the PyrI family. In terms of assembly, contains catalytic and regulatory chains. Zn(2+) serves as cofactor.

Involved in allosteric regulation of aspartate carbamoyltransferase. The sequence is that of Aspartate carbamoyltransferase regulatory chain from Haloarcula marismortui (strain ATCC 43049 / DSM 3752 / JCM 8966 / VKM B-1809) (Halobacterium marismortui).